Reading from the N-terminus, the 320-residue chain is 2-oxoglutarate-dependent dioxygenase thnC (320 aa).

The region spanning 174-278 (PLVQMKLIRY…HSCATFWHGD (105 aa)) is the Fe2OG dioxygenase domain. His199, Asp201, and His258 together coordinate Fe cation. Arg268 is a binding site for 2-oxoglutarate.

It belongs to the iron/ascorbate-dependent oxidoreductase family. Fe(2+) is required as a cofactor.

It carries out the reaction trihazone A + 2-oxoglutarate + O2 + H(+) = trihazone D + succinate + 2 CO2 + H2O. Its pathway is secondary metabolite biosynthesis. Its function is as follows. 2-oxoglutarate-dependent dioxygenase; part of the gene cluster that produces the tetronate natural products trihazones. ThnC catalyzes the oxidative decarboxylation of trihazone A to trihazone D. The C4 hydrogen is first abstracted by the iron-oxo species generated in ThnC to give a tertiary radical at C4. This is followed by decarboxylation and removal of the second electron by the FeIII-OH center to give trihazone D. The pathway begins with the formation of trihazone A by the hybrid PKS-NRPS synthetase thnA and the trans-enoyl reductase thnE. Trihazone A is further decarboxylated by the 2-oxoglutarate-dependent dioxygenase thnC to produce trihazone D. The function of the FAD-dependent monooxygenase thnD has still to be identified. The protein is 2-oxoglutarate-dependent dioxygenase thnC of Trichoderma harzianum (Hypocrea lixii).